The chain runs to 231 residues: Aldehyde decarbonylase (231 aa).

Fe cation-binding residues include glutamate 32, glutamate 60, histidine 63, glutamate 115, and histidine 147.

Belongs to the aldehyde decarbonylase family. Requires Binds 2 metal cations per subunit. The catalytic dinuclear metal-binding site could be either a di-iron or a manganese-iron cofactor. as cofactor.

It carries out the reaction a long-chain fatty aldehyde + 2 NADPH + O2 + H(+) = a long-chain alkane + formate + 2 NADP(+) + H2O. In terms of biological role, catalyzes the decarbonylation of fatty aldehydes to alkanes. Requires the presence of ferredoxin, ferredoxin reductase and NADPH for in vitro decarbonylase activity. Involved in the biosynthesis of alkanes, mainly heptadecane and pentadecane. In Synechocystis sp. (strain ATCC 27184 / PCC 6803 / Kazusa), this protein is Aldehyde decarbonylase.